The chain runs to 92 residues: Protein S100-B (92 aa).

Position 2 is an N-acetylserine (Ser-2). 2 EF-hand domains span residues 13 to 48 and 49 to 84; these read DVFH…LEEI and KEQE…ITTA. Residue His-16 participates in Zn(2+) binding. Residues Ser-19, Glu-22, and Asp-24 each coordinate Ca(2+). His-26 contacts Zn(2+). 5 residues coordinate Ca(2+): Asp-62, Asp-64, Asp-66, Glu-68, and Glu-73. 2 residues coordinate Zn(2+): His-86 and His-91.

Belongs to the S-100 family. As to quaternary structure, dimer of either two alpha chains, or two beta chains, or one alpha and one beta chain. The S100B dimer binds two molecules of STK38. Interacts with CACYBP in a calcium-dependent manner. Interacts with ATAD3A; this interaction probably occurs in the cytosol prior to ATAD3A mitochondrial targeting. Interacts with S100A6. The S100B dimer interacts with two molecules of CAPZA1. Interacts with AGER. Interacts with PPP5C (via TPR repeats); the interaction is calcium-dependent and modulates PPP5C activity. Interacts with TPPP; this interaction inhibits TPPP dimerization. Interacts with isoform CLSTN3beta of CLSTN3; interaction promotes secretion.

It is found in the cytoplasm. The protein resides in the nucleus. The protein localises to the secreted. In terms of biological role, small zinc- and- and calcium-binding protein that is highly expressed in astrocytes and constitutes one of the most abundant soluble proteins in brain. Weakly binds calcium but binds zinc very tightly-distinct binding sites with different affinities exist for both ions on each monomer. Physiological concentrations of potassium ion antagonize the binding of both divalent cations, especially affecting high-affinity calcium-binding sites. Acts as a neurotrophic factor that promotes astrocytosis and axonal proliferation. Involved in innervation of thermogenic adipose tissue by acting as an adipocyte-derived neurotrophic factor that promotes sympathetic innervation of adipose tissue. Binds to and initiates the activation of STK38 by releasing autoinhibitory intramolecular interactions within the kinase. Interaction with AGER after myocardial infarction may play a role in myocyte apoptosis by activating ERK1/2 and p53/TP53 signaling. Could assist ATAD3A cytoplasmic processing, preventing aggregation and favoring mitochondrial localization. May mediate calcium-dependent regulation on many physiological processes by interacting with other proteins, such as TPR-containing proteins, and modulating their activity. This chain is Protein S100-B (S100B), found in Bos taurus (Bovine).